Here is a 562-residue protein sequence, read N- to C-terminus: MTWLEPQIKSQLQSERKDWEANEVGAFLKKAPERKEQFHTIGDFPVQRTYTAADIADTPLEDIGLPGRYPFTRGPYPTMYRSRTWTMRQIAGFGTGEDTNKRFKYLIAQGQTGISTDFDMPTLMGYDSDHPMSDGEVGREGVAIDTLADMEALLADIDLEKISVSFTINPSAWILLAMYVALGEKRGYDLNKLSGTVQADILKEYMAQKEYIYPIAPSVRIVRDIITYSAKNLKRYNPINISGYHISEAGSSPLQEAAFTLANLITYVNEVTKTGMHVDEFAPRLAFFFVSQGDFFEEVAKFRALRRCYAKIMKERFGARNPESMRLRFHCQTAAATLTKPQYMVNVVRTSLQALSAVLGGAQSLHTNGYDEAFAIPTEDAMKMALRTQQIIAEESGVADVIDPLGGSYYVEALTTEYEKKIFEILEEVEKRGGTIKLIEQGWFQKQIADFAYETALRKQSGQKPVIGVNRFVENEEDVKIEIHPYDNTTAERQISRTRRVRAERDEAKVQAMLDQLVAVAKDESQNLMPLTIELVKAGATMGDIVEKLKGIWGTYRETPVF.

Residues 76–79, 86–88, D117, 196–198, R235, N240, H245, and R284 contribute to the (3S)-3-hydroxybutanoyl-CoA site; these read YPTM, TMR, and TVQ.

Belongs to the acyl-CoA mutase large subunit family. Homotetramer composed of two large substrate-binding subunits (HcmA) and two small cobalamin-binding subunits (HcmB).

The enzyme catalyses 2-hydroxyisobutanoyl-CoA = (3S)-3-hydroxybutanoyl-CoA. Its function is as follows. Together with HcmB, catalyzes the isomerization of 2-hydroxyisobutyryl-CoA and 3-hydroxybutyryl-CoA. Is specific for 2-hydroxyisobutyryl-CoA and (S)-3-hydroxybutyryl-CoA, and shows only very low activity with (R)-3-hydroxybutyryl-CoA, isobutyryl-CoA and butyryl-CoA. In vitro, can isomerize pivalyl-CoA and isovaleryl-CoA, with much lower efficiency. Plays a central role in the degradation of substrates bearing a tert-butyl moiety, such as the fuel oxygenate methyl tert-butyl ether (MTBE) and its metabolites. This chain is 2-hydroxyisobutanoyl-CoA mutase large subunit, found in Aquincola tertiaricarbonis.